The sequence spans 298 residues: Putative enoyl-CoA reductase (298 aa).

Transmembrane regions (helical) follow at residues 162 to 182 (CVYY…PYYT), 189 to 209 (LVNA…AVHV), 229 to 249 (ILFS…WVAF), and 254 to 274 (SMLT…EWAV).

The protein belongs to the steroid 5-alpha reductase family.

The protein localises to the membrane. It functions in the pathway lipid metabolism; fatty acid biosynthesis. Involved in the synthesis of fatty acids. In Trypanosoma brucei brucei (strain 927/4 GUTat10.1), this protein is Putative enoyl-CoA reductase.